The sequence spans 385 residues: Spermidine/putrescine import ATP-binding protein PotA (385 aa).

The region spanning 27–257 (ASFRAVSKHY…PANLFVAQFA (231 aa)) is the ABC transporter domain. 59 to 66 (GPSGCGKT) contacts ATP.

This sequence belongs to the ABC transporter superfamily. Spermidine/putrescine importer (TC 3.A.1.11.1) family. As to quaternary structure, the complex is composed of two ATP-binding proteins (PotA), two transmembrane proteins (PotB and PotC) and a solute-binding protein (PotD).

Its subcellular location is the cell inner membrane. The enzyme catalyses ATP + H2O + polyamine-[polyamine-binding protein]Side 1 = ADP + phosphate + polyamineSide 2 + [polyamine-binding protein]Side 1.. Functionally, part of the ABC transporter complex PotABCD involved in spermidine/putrescine import. Responsible for energy coupling to the transport system. The sequence is that of Spermidine/putrescine import ATP-binding protein PotA from Methylococcus capsulatus (strain ATCC 33009 / NCIMB 11132 / Bath).